A 627-amino-acid chain; its full sequence is DNA-directed RNA polymerase subunit gamma (627 aa).

C70, C72, C85, and C88 together coordinate Zn(2+). The Mg(2+) site is built by D468, D470, and D472.

The protein belongs to the RNA polymerase beta' chain family. RpoC1 subfamily. As to quaternary structure, in cyanobacteria the RNAP catalytic core is composed of 2 alpha, 1 beta, 1 beta', 1 gamma and 1 omega subunit. When a sigma factor is associated with the core the holoenzyme is formed, which can initiate transcription. The cofactor is Mg(2+). Zn(2+) serves as cofactor.

It carries out the reaction RNA(n) + a ribonucleoside 5'-triphosphate = RNA(n+1) + diphosphate. Its function is as follows. DNA-dependent RNA polymerase catalyzes the transcription of DNA into RNA using the four ribonucleoside triphosphates as substrates. In Synechococcus sp. (strain JA-2-3B'a(2-13)) (Cyanobacteria bacterium Yellowstone B-Prime), this protein is DNA-directed RNA polymerase subunit gamma.